The primary structure comprises 210 residues: Thymidylate kinase (210 aa).

An ATP-binding site is contributed by 10–17 (GPEGAGKS).

This sequence belongs to the thymidylate kinase family.

The catalysed reaction is dTMP + ATP = dTDP + ADP. In terms of biological role, phosphorylation of dTMP to form dTDP in both de novo and salvage pathways of dTTP synthesis. This is Thymidylate kinase from Ectopseudomonas mendocina (strain ymp) (Pseudomonas mendocina).